We begin with the raw amino-acid sequence, 433 residues long: Legumain (433 aa).

A signal peptide spans M1–A17. The N-linked (GlcNAc...) asparagine glycan is linked to N91. H148 is an active-site residue. N-linked (GlcNAc...) asparagine glycosylation occurs at N167. The Nucleophile role is filled by C189. 2 N-linked (GlcNAc...) asparagine glycosylation sites follow: N263 and N272. Positions D324–Y433 are excised as a propeptide. Intrachain disulfides connect C378-C412 and C390-C429.

This sequence belongs to the peptidase C13 family. In terms of assembly, homodimer before autocatalytic removal of the propeptide. Monomer after autocatalytic processing. May interact with integrins. Activated by autocatalytic processing at pH 4.

The protein localises to the lysosome. It carries out the reaction Hydrolysis of proteins and small molecule substrates at -Asn-|-Xaa- bonds.. Has a strict specificity for hydrolysis of asparaginyl bonds. Can also cleave aspartyl bonds slowly, especially under acidic conditions. Involved in the processing of proteins for MHC class II antigen presentation in the lysosomal/endosomal system. Also involved in MHC class I antigen presentation in cross-presenting dendritic cells by mediating cleavage and maturation of Perforin-2 (MPEG1), thereby promoting antigen translocation in the cytosol. Required for normal lysosomal protein degradation in renal proximal tubules. Required for normal degradation of internalized EGFR. Plays a role in the regulation of cell proliferation via its role in EGFR degradation. This chain is Legumain (LGMN), found in Pongo abelii (Sumatran orangutan).